Consider the following 442-residue polypeptide: Tryptophan synthase beta chain 2 (442 aa).

Lysine 122 carries the N6-(pyridoxal phosphate)lysine modification.

Belongs to the TrpB family. As to quaternary structure, tetramer of two alpha and two beta chains. Pyridoxal 5'-phosphate serves as cofactor.

The enzyme catalyses (1S,2R)-1-C-(indol-3-yl)glycerol 3-phosphate + L-serine = D-glyceraldehyde 3-phosphate + L-tryptophan + H2O. The protein operates within amino-acid biosynthesis; L-tryptophan biosynthesis; L-tryptophan from chorismate: step 5/5. Its function is as follows. The beta subunit is responsible for the synthesis of L-tryptophan from indole and L-serine. The chain is Tryptophan synthase beta chain 2 (trpB2) from Methanosarcina acetivorans (strain ATCC 35395 / DSM 2834 / JCM 12185 / C2A).